The chain runs to 409 residues: Arginine deiminase (409 aa).

Cys399 functions as the Amidino-cysteine intermediate in the catalytic mechanism.

The protein belongs to the arginine deiminase family.

The protein resides in the cytoplasm. It carries out the reaction L-arginine + H2O = L-citrulline + NH4(+). Its pathway is amino-acid degradation; L-arginine degradation via ADI pathway; carbamoyl phosphate from L-arginine: step 1/2. This Streptococcus pneumoniae (strain 70585) protein is Arginine deiminase.